Reading from the N-terminus, the 208-residue chain is Outer-membrane lipoprotein carrier protein (208 aa).

Residues 1-22 (MRKTLTALMLSLPLLTPHMAFA) form the signal peptide.

It belongs to the LolA family. Monomer.

The protein resides in the periplasm. In terms of biological role, participates in the translocation of lipoproteins from the inner membrane to the outer membrane. Only forms a complex with a lipoprotein if the residue after the N-terminal Cys is not an aspartate (The Asp acts as a targeting signal to indicate that the lipoprotein should stay in the inner membrane). The sequence is that of Outer-membrane lipoprotein carrier protein from Shewanella woodyi (strain ATCC 51908 / MS32).